A 121-amino-acid polypeptide reads, in one-letter code: Small ribosomal subunit protein uS13 (121 aa).

The tract at residues 94-121 (RGLPVRGQSTKNNARTRKGPKRTVGAKR) is disordered. The span at 107-121 (ARTRKGPKRTVGAKR) shows a compositional bias: basic residues.

The protein belongs to the universal ribosomal protein uS13 family. As to quaternary structure, part of the 30S ribosomal subunit. Forms a loose heterodimer with protein S19. Forms two bridges to the 50S subunit in the 70S ribosome.

Located at the top of the head of the 30S subunit, it contacts several helices of the 16S rRNA. In the 70S ribosome it contacts the 23S rRNA (bridge B1a) and protein L5 of the 50S subunit (bridge B1b), connecting the 2 subunits; these bridges are implicated in subunit movement. Contacts the tRNAs in the A and P-sites. This is Small ribosomal subunit protein uS13 from Natranaerobius thermophilus (strain ATCC BAA-1301 / DSM 18059 / JW/NM-WN-LF).